A 543-amino-acid polypeptide reads, in one-letter code: ATP synthase subunit alpha (543 aa).

174–181 (GDRQTGKT) is a binding site for ATP.

The protein belongs to the ATPase alpha/beta chains family. In terms of assembly, F-type ATPases have 2 components, CF(1) - the catalytic core - and CF(0) - the membrane proton channel. CF(1) has five subunits: alpha(3), beta(3), gamma(1), delta(1), epsilon(1). CF(0) has three main subunits: a(1), b(2) and c(9-12). The alpha and beta chains form an alternating ring which encloses part of the gamma chain. CF(1) is attached to CF(0) by a central stalk formed by the gamma and epsilon chains, while a peripheral stalk is formed by the delta and b chains.

Its subcellular location is the cell membrane. It carries out the reaction ATP + H2O + 4 H(+)(in) = ADP + phosphate + 5 H(+)(out). Its function is as follows. Produces ATP from ADP in the presence of a proton gradient across the membrane. The alpha chain is a regulatory subunit. The chain is ATP synthase subunit alpha from Bifidobacterium longum subsp. infantis (strain ATCC 15697 / DSM 20088 / JCM 1222 / NCTC 11817 / S12).